We begin with the raw amino-acid sequence, 118 residues long: Alpha-amylase inhibitor 4 (118 aa).

4 disulfides stabilise this stretch: C7–C60, C21–C49, C30–C82, and C50–C101.

This sequence belongs to the protease inhibitor I6 (cereal trypsin/alpha-amylase inhibitor) family.

Its subcellular location is the secreted. Its function is as follows. Alpha-amylase inhibitor. The polypeptide is Alpha-amylase inhibitor 4 (Sorghum bicolor (Sorghum)).